Here is a 304-residue protein sequence, read N- to C-terminus: Protoheme IX farnesyltransferase (304 aa).

7 helical membrane passes run 24–44, 45–65, 107–127, 145–165, 172–192, 234–254, and 277–297; these read VMTL…GTIH, PVIA…AAAL, VFVM…FSIF, IVIG…AVTG, VLLF…LALF, WIGG…LVFV, and LFGY…GDRL.

This sequence belongs to the UbiA prenyltransferase family. Protoheme IX farnesyltransferase subfamily.

The protein resides in the cell inner membrane. It catalyses the reaction heme b + (2E,6E)-farnesyl diphosphate + H2O = Fe(II)-heme o + diphosphate. The protein operates within porphyrin-containing compound metabolism; heme O biosynthesis; heme O from protoheme: step 1/1. In terms of biological role, converts heme B (protoheme IX) to heme O by substitution of the vinyl group on carbon 2 of heme B porphyrin ring with a hydroxyethyl farnesyl side group. This chain is Protoheme IX farnesyltransferase, found in Novosphingobium aromaticivorans (strain ATCC 700278 / DSM 12444 / CCUG 56034 / CIP 105152 / NBRC 16084 / F199).